The primary structure comprises 225 residues: Ribonuclease 3 (225 aa).

The 124-residue stretch at 4–127 folds into the RNase III domain; sequence IEKLEQSLTY…IIGAIHLEAG (124 aa). A Mg(2+)-binding site is contributed by glutamate 40. Residue aspartate 44 is part of the active site. Mg(2+) contacts are provided by aspartate 113 and glutamate 116. The active site involves glutamate 116. Residues 154-223 enclose the DRBM domain; sequence DYKTKLQEIT…AKIALEKLGS (70 aa).

It belongs to the ribonuclease III family. Homodimer. The cofactor is Mg(2+).

It localises to the cytoplasm. The enzyme catalyses Endonucleolytic cleavage to 5'-phosphomonoester.. In terms of biological role, digests double-stranded RNA. Involved in the processing of primary rRNA transcript to yield the immediate precursors to the large and small rRNAs (23S and 16S). Processes some mRNAs, and tRNAs when they are encoded in the rRNA operon. Processes pre-crRNA and tracrRNA of type II CRISPR loci if present in the organism. The chain is Ribonuclease 3 from Campylobacter jejuni subsp. doylei (strain ATCC BAA-1458 / RM4099 / 269.97).